The primary structure comprises 1011 residues: Unconventional myosin ID (1011 aa).

In terms of domain architecture, Myosin motor spans 7–690; sequence AGVQDFVLLD…TLFALEHQRN (684 aa). 100 to 107 lines the ATP pocket; it reads GESGAGKT. The tract at residues 567–589 is actin-binding; that stretch reads MADLVVTLLKKEPFYVRCIKPND. IQ domains are found at residues 694–714 and 716–736; these read PHIVTLLQKRVRGWIVRRNFK and MKAAITIVRAYKAYKLRSYVQ. In terms of domain architecture, TH1 spans 806–1007; it reads AGRRPYWGQA…EGNIIFEVPA (202 aa).

The protein belongs to the TRAFAC class myosin-kinesin ATPase superfamily. Myosin family. Binds to F-actin. Interacts with arm. Interacts with shg. Interacts with ds (via intracellular region). In the embryo, expressed in gastric caeca, midgut cells of the proventriculus, and in the mid and hindgut. In the larval gut brush border, expression is in the terminal web domain. In the adult gut brush border, expression remains in the web domain and has also moved into the microvilli. Also expressed at low levels in follicle cells during oogenesis.

Its subcellular location is the cytoplasm. It is found in the cell cortex. It localises to the cytoskeleton. The protein resides in the cell membrane. The protein localises to the cell junction. Its subcellular location is the adherens junction. It is found in the cell projection. Unconventional myosin that functions as actin-based motor protein with ATPase activity. Binds to membranes enriched in phosphatidylinositol 4-5-bisphosphate, and can glide along actin filaments when anchored to a lipid bilayer. Generates left-right asymmetry at the level of single cells, organs and the whole body via its interaction with the actin cytoskeleton, both in the embryo and the adult. Normal left-right asymmetry of the larval midgut and hindgut requires expression in the embryonic hindgut epithelium during a critical time period, 10 to 12.75 hours after egg laying. This period corresponds to a late stage of germband retraction, and precedes left-right asymmetric morphogenesis. Expression in segment H1 of the imaginal ring is required at 0 to 24 hours after pupation for changes of cell shape and orientation in the H2 segment, which then gives rise to normal, dextral looping of the adult hindgut. Required during a critical period, 126-132 hours after egg laying, for normal, dextral rotation of the adult male genitalia. Has a double role by promoting dextral rotation in the posterior compartment of segment A8 of the male genital disk, and in repressing sinistral looping in the anterior compartment. The protein is Unconventional myosin ID of Drosophila melanogaster (Fruit fly).